We begin with the raw amino-acid sequence, 669 residues long: MAAPCVRLGSVRCTGTLLRYFCGSARHQAAAASHEEIDIPRRKSWDKTAVLQALAYTVSHDPTAAHYMFQDDPFLVPKTSSEFRLYSLSKESGRNAAKYIIGTHPKLFQNDIAEPHIPCLMPENFQPQIEGVSEEALKERIQLRRIKESIDLFDQLLQGGTAPSLETTNRLLDLICFYGDREPTRDIQTSEQNQQDDQDQQETEDSKKRPGQYRKASEILGSWRENNNAERIFNLMPERNAHSFCTLIQGMVKYGSSNKAFNTYTDLMNNRLTADVQTFNALILAAPDMKEKYNEKWDLIVELLKHMVQQNVRPNLLTFNSVLKSLRKCGTMARGLALQTINEMKALNIEPSLGTYNHLLGVFYKGALSPRGQTEILSEVLDEIEGRSFTLRDPDDVYFFTNAMRVCLDLKDIELAYRLHALQQTADNRGLMGDFYLQSTYYGRFFNLLCMMENIDVILKWYRELIPSLYYPNSRGMLDLLQALDMDNCLDLIPQIWKDIKQIGHSNKVELVEEVLKLMARDVQPAELQAAFADTALDIKSLYEVRDRVRIVLEWSSASLGNISVLLARAGRTEEAWKMLQRFKTNHRVPSTEVVDEFLSRAKMDANTNLAISLVQLAVGFSLPNTGKLAERVMEEFNVSEEQRLTLEDLQKSHSSSSSSSESSDSDRE.

Residues 1–13 (MAAPCVRLGSVRC) constitute a mitochondrion transit peptide. 11 PPR repeats span residues 129 to 163 (IEGV…GTAP), 164 to 199 (SLET…DDQD), 209 to 239 (RPGQ…MPER), 240 to 274 (NAHS…RLTA), 275 to 314 (DVQT…NVRP), 315 to 351 (NLLT…NIEP), 352 to 392 (SLGT…FTLR), 396 to 430 (DVYF…DNRG), 438 to 472 (QSTY…LYYP), 473 to 507 (NSRG…GHSN), and 556 to 590 (SSAS…HRVP). A disordered region spans residues 186 to 218 (DIQTSEQNQQDDQDQQETEDSKKRPGQYRKASE). Acidic residues predominate over residues 194-203 (QQDDQDQQET). The interval 648–669 (EDLQKSHSSSSSSSESSDSDRE) is disordered. Positions 653–663 (SHSSSSSSSES) are enriched in low complexity.

Belongs to the mitochondrion-specific ribosomal protein mS39 family.

The protein resides in the mitochondrion. Mitochondrial protein that may have a role in mitochondrial translation. The protein is Small ribosomal subunit protein mS39 (ptcd3) of Xenopus laevis (African clawed frog).